Here is a 225-residue protein sequence, read N- to C-terminus: Probable GTP-binding protein EngB (225 aa).

One can recognise an EngB-type G domain in the interval Val31 to Pro204. GTP-binding positions include Gly39–Ser46, Gly65–Leu69, Asp83–Gly86, Thr150–Asp153, and Phe183–Ser185. Residues Ser46 and Thr67 each contribute to the Mg(2+) site.

It belongs to the TRAFAC class TrmE-Era-EngA-EngB-Septin-like GTPase superfamily. EngB GTPase family. Mg(2+) is required as a cofactor.

In terms of biological role, necessary for normal cell division and for the maintenance of normal septation. The sequence is that of Probable GTP-binding protein EngB from Shewanella pealeana (strain ATCC 700345 / ANG-SQ1).